We begin with the raw amino-acid sequence, 122 residues long: Biogenesis of lysosome-related organelles complex 1 subunit BLS1 (122 aa).

A Phosphoserine modification is found at serine 33.

It belongs to the BLOC1S1 family. Component of the biogenesis of lysosome-related organelles complex-1 (BLOC-1) composed of at least BLI1, BLS1, CNL1, KXD1, SNN1 and VAB2.

The protein resides in the endosome. Functionally, component of the biogenesis of lysosome-related organelles complex-1 (BLOC-1), a complex involved in endosomal cargo sorting. This Saccharomyces cerevisiae (strain RM11-1a) (Baker's yeast) protein is Biogenesis of lysosome-related organelles complex 1 subunit BLS1 (BLS1).